A 214-amino-acid chain; its full sequence is Cytolysin tenebrosin-B (214 aa).

The first 19 residues, 1-19, serve as a signal peptide directing secretion; the sequence is MNRLIIVFIVVTMICAATA. The propeptide occupies 20–35; it reads LSTKRRINKEEKDEKR. The segment at 38–47 is plays an important role in the hemolytic activity; it reads AVAGAVIEGA. Residues 46-65 are N-terminal region; the sequence is GATLTFNVLQTVLKALGDIS. Positions 89, 122, 140, 142, 168, 172, and 173 each coordinate phosphocholine. The interval 140–155 is trp-rich region, which is important for the binding to lipid membrane; the sequence is SIPFDYNLYSNWWNVK. The short motif at 179 to 181 is the Cell attachment site, crucial for protein stability element; the sequence is RGD.

It belongs to the actinoporin family. Sea anemone subfamily. As to quaternary structure, octamer or nonamer in membranes. Monomer in the soluble state.

The protein resides in the secreted. It localises to the nematocyst. It is found in the target cell membrane. In terms of biological role, pore-forming protein that forms cations-selective hydrophilic pores of around 1 nm and causes cardiac stimulation and cytolysis. Pore formation is a multi-step process that involves specific recognition of membrane sphingomyelin (but neither cholesterol nor phosphatidylcholine) using aromatic rich region and adjacent phosphocholine (POC) binding site, firm binding to the membrane (mainly driven by hydrophobic interactions) accompanied by the transfer of the N-terminal region to the lipid-water interface and finally pore formation after oligomerization of monomers. This chain is Cytolysin tenebrosin-B, found in Actinia tenebrosa (Australian red waratah sea anemone).